Reading from the N-terminus, the 354-residue chain is Uroporphyrinogen decarboxylase (354 aa).

Residues 27-31, aspartate 77, tyrosine 154, threonine 209, and histidine 327 contribute to the substrate site; that span reads RQAGR.

This sequence belongs to the uroporphyrinogen decarboxylase family. As to quaternary structure, homodimer.

The protein resides in the cytoplasm. It carries out the reaction uroporphyrinogen III + 4 H(+) = coproporphyrinogen III + 4 CO2. It participates in porphyrin-containing compound metabolism; protoporphyrin-IX biosynthesis; coproporphyrinogen-III from 5-aminolevulinate: step 4/4. Catalyzes the decarboxylation of four acetate groups of uroporphyrinogen-III to yield coproporphyrinogen-III. This is Uroporphyrinogen decarboxylase from Escherichia coli O81 (strain ED1a).